Here is a 725-residue protein sequence, read N- to C-terminus: Ribosomal RNA large subunit methyltransferase K/L (725 aa).

The THUMP domain maps to 45 to 156; sequence SGYRACLWSR…RGRLSLGIDL (112 aa).

Belongs to the methyltransferase superfamily. RlmKL family.

The protein localises to the cytoplasm. The enzyme catalyses guanosine(2445) in 23S rRNA + S-adenosyl-L-methionine = N(2)-methylguanosine(2445) in 23S rRNA + S-adenosyl-L-homocysteine + H(+). The catalysed reaction is guanosine(2069) in 23S rRNA + S-adenosyl-L-methionine = N(2)-methylguanosine(2069) in 23S rRNA + S-adenosyl-L-homocysteine + H(+). In terms of biological role, specifically methylates the guanine in position 2445 (m2G2445) and the guanine in position 2069 (m7G2069) of 23S rRNA. This is Ribosomal RNA large subunit methyltransferase K/L from Marinobacter nauticus (strain ATCC 700491 / DSM 11845 / VT8) (Marinobacter aquaeolei).